The sequence spans 274 residues: Kit ligand (274 aa).

A signal peptide spans 1-25; the sequence is MKKTQTWIITCIYLQLLLFNPLVHS. Gln-26 bears the Pyrrolidone carboxylic acid mark. Topologically, residues 26–215 are extracellular; sequence QGICRNRVTD…SNSIEDSSLQ (190 aa). 2 disulfides stabilise this stretch: Cys-29–Cys-114 and Cys-68–Cys-164. N-linked (GlcNAc...) asparagine glycans are attached at residues Asn-90, Asn-97, Asn-145, and Asn-196. The chain crosses the membrane as a helical span at residues 216 to 238; the sequence is WAAVALPAFFSLVIGFAFGALYW. Residues 239–274 are Cytoplasmic-facing; that stretch reads KKKQPNLTRTVENRQINEEDNEISMLQEKEREFQEV.

Belongs to the SCF family. Homodimer, non-covalently linked. A soluble form is produced by proteolytic processing of the extracellular domain.

It localises to the cytoplasm. The protein localises to the cytoskeleton. Its subcellular location is the cell membrane. It is found in the cell projection. The protein resides in the lamellipodium. It localises to the filopodium. The protein localises to the secreted. In terms of biological role, stimulates the proliferation of mast cells. Able to augment the proliferation of both myeloid and lymphoid hematopoietic progenitors in bone marrow culture. Also mediates cell-cell adhesion. Acts synergistically with other cytokines, probably interleukins. This Capra hircus (Goat) protein is Kit ligand (KITLG).